The chain runs to 62 residues: Protein DsrB (62 aa).

Belongs to the DsrB family.

In Shigella flexneri serotype 5b (strain 8401), this protein is Protein DsrB.